The primary structure comprises 258 residues: Triosephosphate isomerase (258 aa).

9-11 contributes to the substrate binding site; sequence NWK. H95 functions as the Electrophile in the catalytic mechanism. Residue E167 is the Proton acceptor of the active site. 2 residues coordinate substrate: G173 and S212.

Belongs to the triosephosphate isomerase family. In terms of assembly, homodimer.

It localises to the cytoplasm. The enzyme catalyses D-glyceraldehyde 3-phosphate = dihydroxyacetone phosphate. The protein operates within carbohydrate biosynthesis; gluconeogenesis. It participates in carbohydrate degradation; glycolysis; D-glyceraldehyde 3-phosphate from glycerone phosphate: step 1/1. In terms of biological role, involved in the gluconeogenesis. Catalyzes stereospecifically the conversion of dihydroxyacetone phosphate (DHAP) to D-glyceraldehyde-3-phosphate (G3P). The protein is Triosephosphate isomerase of Blochmanniella pennsylvanica (strain BPEN).